A 248-amino-acid chain; its full sequence is ATP synthase subunit a, chloroplastic (248 aa).

The next 4 membrane-spanning stretches (helical) occupy residues 96 to 116, 135 to 155, 200 to 220, and 221 to 241; these read VPFIGTMFLFIFASNWSGALL, INTTVALALLTSVAYFYAGLY, LVVAVLVSLVPLIVPVPMMLL, and GLFTSGIQALIFATLAAAYIG.

Belongs to the ATPase A chain family. In terms of assembly, F-type ATPases have 2 components, CF(1) - the catalytic core - and CF(0) - the membrane proton channel. CF(1) has five subunits: alpha(3), beta(3), gamma(1), delta(1), epsilon(1). CF(0) has four main subunits: a, b, b' and c.

It localises to the plastid. The protein localises to the chloroplast thylakoid membrane. Functionally, key component of the proton channel; it plays a direct role in the translocation of protons across the membrane. This is ATP synthase subunit a, chloroplastic from Adiantum capillus-veneris (Maidenhair fern).